Reading from the N-terminus, the 316-residue chain is ATP synthase gamma chain (316 aa).

Belongs to the ATPase gamma chain family. In terms of assembly, F-type ATPases have 2 components, CF(1) - the catalytic core - and CF(0) - the membrane proton channel. CF(1) has five subunits: alpha(3), beta(3), gamma(1), delta(1), epsilon(1). CF(0) has three main subunits: a, b and c.

Its subcellular location is the cellular thylakoid membrane. In terms of biological role, produces ATP from ADP in the presence of a proton gradient across the membrane. The gamma chain is believed to be important in regulating ATPase activity and the flow of protons through the CF(0) complex. This is ATP synthase gamma chain from Parasynechococcus marenigrum (strain WH8102).